A 91-amino-acid polypeptide reads, in one-letter code: CLAVATA3/ESR (CLE)-related protein 27 (91 aa).

Residues 1 to 35 (MTHAREWRSSLTTTLLMVILLSYMLHLFCVYSRVG) form the signal peptide. Hydroxyproline occurs at positions 83 and 86. Pro-86 carries an O-linked (Ara...) hydroxyproline glycan.

Belongs to the CLV3/ESR signal peptide family. In terms of processing, the O-glycosylation (arabinosylation) of the hydroxyproline Pro-86 enhances binding affinity of the CLE27p peptide for its receptor. As to expression, mostly expressed in apex, and, to a lower extent, in roots, leaves, flowers and siliques.

The protein localises to the secreted. It localises to the extracellular space. In terms of biological role, extracellular signal peptide that regulates cell fate. Represses root apical meristem maintenance. The sequence is that of CLAVATA3/ESR (CLE)-related protein 27 from Arabidopsis thaliana (Mouse-ear cress).